The sequence spans 261 residues: Cytochrome c oxidase subunit 3 (261 aa).

The Mitochondrial matrix segment spans residues 1-15 (MAHQAHSYHMVDPSP). A helical transmembrane segment spans residues 16-34 (WPIFGAAAALLTTSGLIMW). At 35-40 (FHYSST) the chain is on the mitochondrial intermembrane side. A helical membrane pass occupies residues 41–66 (TLLTMGLLSMLLVMLQWWRDVVREST). The Mitochondrial matrix segment spans residues 67–72 (FQGHHT). The chain crosses the membrane as a helical span at residues 73–105 (PTVQKGLRYGMILFITSEAFFFLGFFWAFFHSS). Topologically, residues 106–128 (LAPTPELGGQWPPTGVKPLNPLE) are mitochondrial intermembrane. A helical transmembrane segment spans residues 129–152 (VPLLNTAILLASGVTVTWAHHSIT). Over 153-155 (EGN) the chain is Mitochondrial matrix. The chain crosses the membrane as a helical span at residues 156 to 183 (RKQAIHALTLTILLGFYFTALQAMEYHE). The Mitochondrial intermembrane portion of the chain corresponds to 184 to 190 (ASFSIAD). Residues 191-223 (SVYGSTFFVATGFHGLHVIIGSSFLTVCLLRLI) traverse the membrane as a helical segment. The Mitochondrial matrix portion of the chain corresponds to 224-232 (KFHFTPNHH). Residues 233 to 256 (FGFEAAAWYWHFVDIIWLFLYMSM) form a helical membrane-spanning segment. Topologically, residues 257-261 (YWWGS) are mitochondrial intermembrane.

Belongs to the cytochrome c oxidase subunit 3 family. In terms of assembly, component of the cytochrome c oxidase (complex IV, CIV), a multisubunit enzyme composed of 14 subunits. The complex is composed of a catalytic core of 3 subunits MT-CO1, MT-CO2 and MT-CO3, encoded in the mitochondrial DNA, and 11 supernumerary subunits COX4I, COX5A, COX5B, COX6A, COX6B, COX6C, COX7A, COX7B, COX7C, COX8 and NDUFA4, which are encoded in the nuclear genome. The complex exists as a monomer or a dimer and forms supercomplexes (SCs) in the inner mitochondrial membrane with NADH-ubiquinone oxidoreductase (complex I, CI) and ubiquinol-cytochrome c oxidoreductase (cytochrome b-c1 complex, complex III, CIII), resulting in different assemblies (supercomplex SCI(1)III(2)IV(1) and megacomplex MCI(2)III(2)IV(2)).

The protein localises to the mitochondrion inner membrane. It carries out the reaction 4 Fe(II)-[cytochrome c] + O2 + 8 H(+)(in) = 4 Fe(III)-[cytochrome c] + 2 H2O + 4 H(+)(out). Component of the cytochrome c oxidase, the last enzyme in the mitochondrial electron transport chain which drives oxidative phosphorylation. The respiratory chain contains 3 multisubunit complexes succinate dehydrogenase (complex II, CII), ubiquinol-cytochrome c oxidoreductase (cytochrome b-c1 complex, complex III, CIII) and cytochrome c oxidase (complex IV, CIV), that cooperate to transfer electrons derived from NADH and succinate to molecular oxygen, creating an electrochemical gradient over the inner membrane that drives transmembrane transport and the ATP synthase. Cytochrome c oxidase is the component of the respiratory chain that catalyzes the reduction of oxygen to water. Electrons originating from reduced cytochrome c in the intermembrane space (IMS) are transferred via the dinuclear copper A center (CU(A)) of subunit 2 and heme A of subunit 1 to the active site in subunit 1, a binuclear center (BNC) formed by heme A3 and copper B (CU(B)). The BNC reduces molecular oxygen to 2 water molecules using 4 electrons from cytochrome c in the IMS and 4 protons from the mitochondrial matrix. The polypeptide is Cytochrome c oxidase subunit 3 (MT-CO3) (Gallus gallus (Chicken)).